The primary structure comprises 85 residues: Large ribosomal subunit protein bL27 (85 aa).

A disordered region spans residues 1–27 (MAHKKAGGSTKNGRDSQSKRLGVKRYG).

It belongs to the bacterial ribosomal protein bL27 family.

This Halorhodospira halophila (strain DSM 244 / SL1) (Ectothiorhodospira halophila (strain DSM 244 / SL1)) protein is Large ribosomal subunit protein bL27.